Consider the following 151-residue polypeptide: 3-hydroxyacyl-thioester dehydratase Z (151 aa).

The region spanning 11-131 (AAAAGEKVGQ…TVQATVSTTV (121 aa)) is the MaoC-like domain. Residues 60–63 (IAHG), 86–89 (AINY), 97–99 (PAP), glutamine 124, and arginine 148 contribute to the substrate site.

The protein belongs to the enoyl-CoA hydratase/isomerase family. In terms of assembly, homodimer.

It catalyses the reaction a (3R)-3-hydroxyacyl-CoA = a (2E)-enoyl-CoA + H2O. Functionally, shows trans-enoyl-CoA hydratase/3-hydroxyacyl-CoA dehydratase activity. This is 3-hydroxyacyl-thioester dehydratase Z from Mycobacterium bovis (strain ATCC BAA-935 / AF2122/97).